Reading from the N-terminus, the 154-residue chain is Leghemoglobin-2 (154 aa).

The 149-residue stretch at 3–151 (ALTESQAALV…LAIVIKKEMN (149 aa)) folds into the Globin domain. Serine 46 lines the heme b pocket. Position 46 is a phosphoserine (serine 46). Histidine 64 contributes to the O2 binding site. 3 residues coordinate heme b: lysine 67, histidine 98, and lysine 101. Tyrosine 139 bears the Nitrated tyrosine mark.

It belongs to the plant globin family. In terms of assembly, monomer. Nitrated in effective nodules and particularly in hypoxic conditions; this mechanism may play a protective role in the symbiosis by buffering toxic peroxynitrite NO(2)(-). Nitration level decrease during nodule senescence. In terms of processing, phosphorylation at Ser-46 disrupts the molecular environment of its porphyrin ring oxygen binding pocket, thus leading to a reduced oxygen consumption and to the delivery of oxygen O(2) to symbiosomes. As to expression, root nodules.

Its subcellular location is the cytoplasm. The protein resides in the cytosol. It localises to the nucleus. In terms of biological role, leghemoglobin that reversibly binds oxygen O(2) through a pentacoordinated heme iron. In root nodules, facilitates the diffusion of oxygen to the bacteroids while preventing the bacterial nitrogenase from being inactivated by buffering dioxygen, nitric oxide and carbon monoxide, and promoting the formation of reactive oxygen species (ROS, e.g. H(2)O(2)). This role is essential for symbiotic nitrogen fixation (SNF). This chain is Leghemoglobin-2, found in Lupinus luteus (European yellow lupine).